We begin with the raw amino-acid sequence, 711 residues long: Polyribonucleotide nucleotidyltransferase (711 aa).

Mg(2+) is bound by residues aspartate 490 and aspartate 496. The KH domain maps to 557-616; the sequence is PRIETMQIPTDKIREVIGSGGKVIREIVETSGAKVDINDDGIIKIASANGEAIKKAYEMI. Positions 626–694 constitute an S1 motif domain; sequence GKVYTGTVVK…DRGKVRLSMK (69 aa).

The protein belongs to the polyribonucleotide nucleotidyltransferase family. Mg(2+) serves as cofactor.

It localises to the cytoplasm. The enzyme catalyses RNA(n+1) + phosphate = RNA(n) + a ribonucleoside 5'-diphosphate. Functionally, involved in mRNA degradation. Catalyzes the phosphorolysis of single-stranded polyribonucleotides processively in the 3'- to 5'-direction. This Dinoroseobacter shibae (strain DSM 16493 / NCIMB 14021 / DFL 12) protein is Polyribonucleotide nucleotidyltransferase.